The sequence spans 677 residues: Membrane-associated tyrosine- and threonine-specific cdc2-inhibitory kinase wee-1.3 (677 aa).

Residues 1-22 (MDDTEGNSSMDSIRNGQSSPLP) show a composition bias toward polar residues. Positions 1–30 (MDDTEGNSSMDSIRNGQSSPLPQVTPRLPQ) are disordered. Positions 108-355 (FQIDEIIGRG…SRDLLDHPVI (248 aa)) constitute a Protein kinase domain. ATP is bound by residues 114–122 (IGRGSFGEV) and Lys137. Asp228 functions as the Proton acceptor in the catalytic mechanism. Residues Asn233 and Asp246 each coordinate Mg(2+). 2 disordered regions span residues 478-526 (FDND…GTPR) and 632-677 (EPSN…GDEV). Polar residues predominate over residues 489–499 (ATCSSSNSSAI). Residues 638–652 (TVDHHTILEQSESPR) are compositionally biased toward basic and acidic residues.

The protein belongs to the protein kinase superfamily. Ser/Thr protein kinase family. WEE1 subfamily.

Its subcellular location is the golgi apparatus membrane. The protein localises to the cytoplasm. The catalysed reaction is L-seryl-[protein] + ATP = O-phospho-L-seryl-[protein] + ADP + H(+). The enzyme catalyses L-threonyl-[protein] + ATP = O-phospho-L-threonyl-[protein] + ADP + H(+). Acts as a negative regulator of entry into mitosis (G2 to M transition) by phosphorylation of the CDK1 kinase during oocyte maturation. Required for oocyte maturation, embryonic development, germline proliferation and initiation of meiosis during spermatogenesis. Required for chromosome structure during mitosis and negative regulation of nuclear envelope breakdown. This Caenorhabditis elegans protein is Membrane-associated tyrosine- and threonine-specific cdc2-inhibitory kinase wee-1.3 (wee-1.3).